Here is a 334-residue protein sequence, read N- to C-terminus: Cell division protein ZipA (334 aa).

Topologically, residues 1 to 2 (ME) are periplasmic. A helical transmembrane segment spans residues 3–23 (LHIIFLILGGLLIVLLAGFSI). The Cytoplasmic segment spans residues 24-334 (YSARREKSRI…DRQAYFARVS (311 aa)).

It belongs to the ZipA family. Interacts with FtsZ via their C-terminal domains.

The protein localises to the cell inner membrane. In terms of biological role, essential cell division protein that stabilizes the FtsZ protofilaments by cross-linking them and that serves as a cytoplasmic membrane anchor for the Z ring. Also required for the recruitment to the septal ring of downstream cell division proteins. This is Cell division protein ZipA from Haemophilus ducreyi (strain 35000HP / ATCC 700724).